We begin with the raw amino-acid sequence, 44 residues long: Protein PsbN (44 aa).

Residues 6 to 26 form a helical membrane-spanning segment; it reads FFFSLFVWCLLLSITAYSLYV.

It belongs to the PsbN family.

It localises to the plastid. The protein localises to the chloroplast thylakoid membrane. May play a role in photosystem I and II biogenesis. The chain is Protein PsbN from Tupiella akineta (Green alga).